We begin with the raw amino-acid sequence, 443 residues long: Probable 26S proteasome regulatory subunit 4 (443 aa).

Residues 1 to 53 (MGQQQSGFGGRGNDRGAGDGEKKEKKKYEAPIPSRIGKKKKGSKGPDAASKLP) are disordered. Over residues 12-29 (GNDRGAGDGEKKEKKKYE) the composition is skewed to basic and acidic residues. Residue 229 to 236 (GCPGTGKT) participates in ATP binding.

The protein belongs to the AAA ATPase family.

The protein localises to the cytoplasm. It is found in the nucleus. In terms of biological role, the 26S proteasome is involved in the ATP-dependent degradation of ubiquitinated proteins. The regulatory (or ATPase) complex confers ATP dependency and substrate specificity to the 26S complex. May play a role in the degradation of microtubule severing protein mei-1. The protein is Probable 26S proteasome regulatory subunit 4 (rpt-2) of Caenorhabditis elegans.